A 1313-amino-acid polypeptide reads, in one-letter code: Ataxin-2 (1313 aa).

Residues 1–12 (MRSAAAAPRSPA) are compositionally biased toward low complexity. The tract at residues 1-255 (MRSAAAAPRS…RNSNKGLPQS (255 aa)) is disordered. Over residues 48-65 (GPYPSAAPPPPGPGPPPS) the composition is skewed to pro residues. 4 stretches are compositionally biased toward low complexity: residues 104 to 114 (FVVLLLPLASP), 141 to 154 (ARPAPGCPRPACEP), 166 to 187 (QQQQQQQQQQQQQQQQQQQQQQ), and 204 to 234 (LLASPAAAPSPSSSSVSSSSATAPSSVVAAT). The span at 235–244 (SGGGRPGLGR) shows a compositional bias: gly residues. Phosphoserine is present on S248. Residues 267–344 (RMVHILTSVV…FVVVQFKDMD (78 aa)) enclose the Sm domain. Phosphoserine occurs at positions 393, 466, 478, 508, and 554. Composition is skewed to basic and acidic residues over residues 459–471 (ALENDDRSEEEKY) and 478–492 (SSEREGHSINTRENK). Disordered regions lie at residues 459-954 (ALEN…HQQP) and 1137-1219 (NATL…NSFP). A compositionally biased stretch (polar residues) spans 508-544 (SGRQNSPRMGQPGSGSMPSRSTSHTSDFNPNSGSDQR). A compositionally biased stretch (pro residues) spans 552–562 (WPSPCPSPSSR). Low complexity predominate over residues 563–581 (PPSRYQSGPNSLPPRAATP). Over residues 582 to 598 (TRPPSRPPSRPSRPPSH) the composition is skewed to pro residues. Phosphoserine is present on S624. Positions 627-637 (AQRHPRNHRVS) are enriched in basic residues. R640 is subject to Asymmetric dimethylarginine; alternate. R640 bears the Omega-N-methylarginine; alternate mark. S642 carries the post-translational modification Phosphoserine. A compositionally biased stretch (low complexity) spans 666-681 (TSPSGGTWSSVVSGVP). A Phosphoserine modification is found at S684. Residues 693–703 (PRQNSIGNTPS) show a composition bias toward polar residues. Residue S728 is modified to Phosphoserine. T741 bears the Phosphothreonine mark. Residues 768-777 (PNETSPSFSK) are compositionally biased toward polar residues. A phosphoserine mark is found at S772 and S784. The span at 788-804 (SEHRKQIDDLKKFKNDF) shows a compositional bias: basic and acidic residues. Polar residues predominate over residues 807–820 (QPSSTSESMDQLLN). Residues 821 to 844 (KNREGEKSRDLIKDKIEPSAKDSF) show a composition bias toward basic and acidic residues. The segment covering 847-871 (NSSSNCTSGSSKPNSPSISPSILSN) has biased composition (low complexity). A phosphoserine mark is found at S856, S857, S861, S865, S867, S888, and S889. The span at 880 to 891 (VTSQGVQTSSPA) shows a compositional bias: polar residues. K893 participates in a covalent cross-link: Glycyl lysine isopeptide (Lys-Gly) (interchain with G-Cter in SUMO2). A compositionally biased stretch (basic and acidic residues) spans 893–910 (KQEKDDKEEKKDAAEQVR). 2 stretches are compositionally biased toward low complexity: residues 925–936 (SFSQPKPSTTPT) and 1155–1192 (GQQQSQHGGSHPAPSPVQHHQHQAAQALHLASPQQQSA). Polar residues predominate over residues 1206–1219 (TPASNTQSPQNSFP).

The protein belongs to the ataxin-2 family. In terms of assembly, monomer. Can also form homodimers. Interacts with TARDBP; the interaction is RNA-dependent. Interacts with RBFOX1. Interacts with polyribosomes. Interacts with SH3GL2 and SH3GL3. Interacts with SH3KBP1 and CBL. Interacts with EGFR. Interacts with ATXN2L. Expressed in the brain, heart, liver, skeletal muscle, pancreas and placenta. Isoform 1 is predominant in the brain and spinal cord. Isoform 4 is more abundant in the cerebellum. In the brain, broadly expressed in the amygdala, caudate nucleus, corpus callosum, hippocampus, hypothalamus, substantia nigra, subthalamic nucleus and thalamus.

Its subcellular location is the cytoplasm. Functionally, involved in EGFR trafficking, acting as negative regulator of endocytic EGFR internalization at the plasma membrane. In Homo sapiens (Human), this protein is Ataxin-2 (ATXN2).